Consider the following 397-residue polypeptide: Phosphoglycerate kinase (397 aa).

Substrate-binding positions include 22-24 (DLN), Arg-37, 60-63 (HFGR), Arg-119, and Arg-152. ATP is bound by residues Lys-202, Glu-324, and 354–357 (GGDT).

This sequence belongs to the phosphoglycerate kinase family. In terms of assembly, monomer.

The protein resides in the cytoplasm. It carries out the reaction (2R)-3-phosphoglycerate + ATP = (2R)-3-phospho-glyceroyl phosphate + ADP. Its pathway is carbohydrate degradation; glycolysis; pyruvate from D-glyceraldehyde 3-phosphate: step 2/5. The protein is Phosphoglycerate kinase of Rhizorhabdus wittichii (strain DSM 6014 / CCUG 31198 / JCM 15750 / NBRC 105917 / EY 4224 / RW1) (Sphingomonas wittichii).